A 266-amino-acid chain; its full sequence is UPF0246 protein Pcryo_0542 (266 aa).

Belongs to the UPF0246 family.

The sequence is that of UPF0246 protein Pcryo_0542 from Psychrobacter cryohalolentis (strain ATCC BAA-1226 / DSM 17306 / VKM B-2378 / K5).